The following is a 360-amino-acid chain: D-alanine--D-alanine ligase (360 aa).

The ATP-grasp domain maps to 134–343 (KILAQRVGVP…YTELITRLIE (210 aa)). ATP is bound at residue 169-224 (AEKLGRDMFVKPSNQGSSVGVSHVTNADEYAAALKEAFKYDDKVLVEETVPGTEVE). Residues D297, E310, and N312 each coordinate Mg(2+).

Belongs to the D-alanine--D-alanine ligase family. Requires Mg(2+) as cofactor. Mn(2+) is required as a cofactor.

It is found in the cytoplasm. It carries out the reaction 2 D-alanine + ATP = D-alanyl-D-alanine + ADP + phosphate + H(+). It functions in the pathway cell wall biogenesis; peptidoglycan biosynthesis. Functionally, cell wall formation. This Lactobacillus helveticus (strain DPC 4571) protein is D-alanine--D-alanine ligase.